The primary structure comprises 187 residues: uncharacterized protein (187 aa).

The chain crosses the membrane as a helical span at residues 8-28 (ITFFIILLICLICILLLLVVF). The segment at 99 to 153 (PLENRRDMEAEEENQINEKQEPENAGETGQEEDDGLQKIHTSVTRTPSVVESQKR) is disordered. Over residues 137–149 (IHTSVTRTPSVVE) the composition is skewed to polar residues.

It localises to the membrane. This is an uncharacterized protein from Homo sapiens (Human).